Consider the following 362-residue polypeptide: MVIIMKLLEETLRRIKPADEEVIKKAWSRMDSLSKPIGSLGKLEEIAVQISGITGKVKNEINKKMTVIMCSDNGICEEGVSACPQELTALLAENYVKEITGIGVLSKHVNADMCVVDIGIKSDVKDSRILNKKVAYGTKNMAKEPAMTREEAVKAIETGIELVDKFVKEGYDLFGTGEAGIGNTATSAAVISVLSQIDSDKIVGKGSGLTDEGFLNKKRAVKQAIEINKPNKEDVIDVIAKIGGFDIAGICGCFLGAAKNRVPIVIDGIISASAALCAYKMNANVKDFLISSHLSAEPGIEYVTGAIGLKPCLHMEMRLGEGSGCPLQFFMIESALCLMNNMATLAEASIVDSEFLVDIREK.

The Proton acceptor role is filled by Glu321.

It belongs to the CobT family.

It carries out the reaction 5,6-dimethylbenzimidazole + nicotinate beta-D-ribonucleotide = alpha-ribazole 5'-phosphate + nicotinate + H(+). The protein operates within nucleoside biosynthesis; alpha-ribazole biosynthesis; alpha-ribazole from 5,6-dimethylbenzimidazole: step 1/2. Functionally, catalyzes the synthesis of alpha-ribazole-5'-phosphate from nicotinate mononucleotide (NAMN) and 5,6-dimethylbenzimidazole (DMB). The protein is Nicotinate-nucleotide--dimethylbenzimidazole phosphoribosyltransferase of Clostridium tetani (strain Massachusetts / E88).